A 372-amino-acid polypeptide reads, in one-letter code: Glutamate 5-kinase (372 aa).

Lys14 is a binding site for ATP. Residues Ser54, Asp141, and Asn153 each contribute to the substrate site. Residue 173–174 (TD) coordinates ATP. Residues 280 to 358 (RGHVVIDAGA…GEIETVLGYM (79 aa)) form the PUA domain.

The protein belongs to the glutamate 5-kinase family.

It is found in the cytoplasm. The enzyme catalyses L-glutamate + ATP = L-glutamyl 5-phosphate + ADP. The protein operates within amino-acid biosynthesis; L-proline biosynthesis; L-glutamate 5-semialdehyde from L-glutamate: step 1/2. Catalyzes the transfer of a phosphate group to glutamate to form L-glutamate 5-phosphate. In Burkholderia vietnamiensis (strain G4 / LMG 22486) (Burkholderia cepacia (strain R1808)), this protein is Glutamate 5-kinase.